Reading from the N-terminus, the 949-residue chain is AP-1 complex subunit beta-1 (949 aa).

Position 318 is an N6-acetyllysine (K318). At Y574 the chain carries 3'-nitrotyrosine. The tract at residues 592–623 is disordered; that stretch reads SLPPRTASSESTESPEAAPAGAPASDQPDVIP. The segment covering 594 to 616 has biased composition (low complexity); the sequence is PPRTASSESTESPEAAPAGAPAS.

The protein belongs to the adaptor complexes large subunit family. As to quaternary structure, adaptor protein complex 1 (AP-1) is a heterotetramer composed of two large adaptins (gamma-type subunit AP1G1 and beta-type subunit AP1B1), a medium adaptin (mu-type subunit AP1M1 or AP1M2) and a small adaptin (sigma-type subunit AP1S1 or AP1S2 or AP1S3). The N-terminus is blocked.

The protein localises to the golgi apparatus. It localises to the cytoplasmic vesicle. The protein resides in the clathrin-coated vesicle membrane. In terms of biological role, subunit of clathrin-associated adaptor protein complex 1 that plays a role in protein sorting in the late-Golgi/trans-Golgi network (TGN) and/or endosomes. The AP complexes mediate both the recruitment of clathrin to membranes and the recognition of sorting signals within the cytosolic tails of transmembrane cargo molecules. This chain is AP-1 complex subunit beta-1 (Ap1b1), found in Rattus norvegicus (Rat).